The primary structure comprises 149 residues: Thioredoxin-like protein 4B (149 aa).

This sequence belongs to the DIM1 family. As to quaternary structure, homodimer. Interacts with the U5-102 kDa protein subunit of the spliceosome.

It is found in the nucleus. In terms of biological role, essential role in pre-mRNA splicing. Required in cell cycle progression for S/G(2) transition. The chain is Thioredoxin-like protein 4B (TXNL4B) from Homo sapiens (Human).